Reading from the N-terminus, the 165-residue chain is MPLNREDKQAVVAEVSAQVAKAQTVVLAEYRGIAVGDLTKLRAQAREQQVYLRVLKNTLARRAVEGTPFAPLAEQMTGPLIYGISEDAIAAAKVVNDFSKSNDKLVIKAGSFDGKVMDKAGVQALASIPSREELLSKLLFVMQSPVSSFARALAALAEKKQAEAA.

It belongs to the universal ribosomal protein uL10 family. In terms of assembly, part of the ribosomal stalk of the 50S ribosomal subunit. The N-terminus interacts with L11 and the large rRNA to form the base of the stalk. The C-terminus forms an elongated spine to which L12 dimers bind in a sequential fashion forming a multimeric L10(L12)X complex.

Functionally, forms part of the ribosomal stalk, playing a central role in the interaction of the ribosome with GTP-bound translation factors. The protein is Large ribosomal subunit protein uL10 of Burkholderia lata (strain ATCC 17760 / DSM 23089 / LMG 22485 / NCIMB 9086 / R18194 / 383).